Consider the following 107-residue polypeptide: Ig kappa chain V-VI region NQ6-8.3.1 (107 aa).

Residues 1–23 (QIVLTQSPAIMSASPGQKVTMTC) form a framework-1 region. Cys-23 and Cys-87 are joined by a disulfide. The complementarity-determining-1 stretch occupies residues 24–33 (SASSSVSYMH). The framework-2 stretch occupies residues 34 to 48 (WYQQKSGTSPKRWIY). Residues 49 to 55 (DTSKLAS) are complementarity-determining-2. The interval 56-87 (GXPARFSGSGSATSYSLTITSMQAEDAATYYC) is framework-3. The tract at residues 88–96 (QQWSSNPLT) is complementarity-determining-3. A framework-4 region spans residues 97–106 (FGAGTKLELK).

Anti-2-phenyl oxazolone (PHOX) Antibody. The chain is Ig kappa chain V-VI region NQ6-8.3.1 from Mus musculus (Mouse).